The sequence spans 179 residues: Large ribosomal subunit protein eL18 (179 aa).

This sequence belongs to the eukaryotic ribosomal protein eL18 family. Component of the large ribosomal subunit.

The protein localises to the cytoplasm. The protein resides in the cytosol. It is found in the rough endoplasmic reticulum. Functionally, component of the large ribosomal subunit. The ribosome is a large ribonucleoprotein complex responsible for the synthesis of proteins in the cell. The chain is Large ribosomal subunit protein eL18 (rpl18) from Salmo salar (Atlantic salmon).